Here is a 364-residue protein sequence, read N- to C-terminus: Histidinol-phosphate aminotransferase (364 aa).

The residue at position 226 (lysine 226) is an N6-(pyridoxal phosphate)lysine.

Belongs to the class-II pyridoxal-phosphate-dependent aminotransferase family. Histidinol-phosphate aminotransferase subfamily. In terms of assembly, homodimer. Pyridoxal 5'-phosphate is required as a cofactor.

The catalysed reaction is L-histidinol phosphate + 2-oxoglutarate = 3-(imidazol-4-yl)-2-oxopropyl phosphate + L-glutamate. The protein operates within amino-acid biosynthesis; L-histidine biosynthesis; L-histidine from 5-phospho-alpha-D-ribose 1-diphosphate: step 7/9. The sequence is that of Histidinol-phosphate aminotransferase from Campylobacter jejuni subsp. jejuni serotype O:2 (strain ATCC 700819 / NCTC 11168).